The primary structure comprises 289 residues: T-cell ecto-ADP-ribosyltransferase 2 (289 aa).

A signal peptide spans 1–20 (MTSKIFKFFLTWWLTQQVTG). Disulfide bonds link C41–C246 and C141–C193. Positions 61-241 (EELKLEWEKA…IFLDSPERKK (181 aa)) constitute a TR mART core domain. N79 carries N-linked (GlcNAc...) asparagine glycosylation. Residues Y98, R146, and Q164 each contribute to the NAD(+) site. The active site involves R146. Residue S167 is part of the active site. Position 202 (S202) interacts with NAD(+). Residue E209 is part of the active site. N249 carries N-linked (GlcNAc...) asparagine glycosylation. S260 carries GPI-anchor amidated serine lipidation. A propeptide spans 261–289 (ISGSRESCVSLFLVVLLGLLVQQLTLAEL) (removed in mature form).

This sequence belongs to the Arg-specific ADP-ribosyltransferase family. As to expression, expressed in spleen, intestine and thymus.

It localises to the cell membrane. It catalyses the reaction L-arginyl-[protein] + NAD(+) = N(omega)-(ADP-D-ribosyl)-L-arginyl-[protein] + nicotinamide + H(+). It carries out the reaction NAD(+) + H2O = ADP-D-ribose + nicotinamide + H(+). In terms of biological role, has both NAD(+) glycohydrolase and ADP-ribosyltransferase activity. The protein is T-cell ecto-ADP-ribosyltransferase 2 (Art2b) of Mus musculus (Mouse).